The sequence spans 104 residues: L-rhamnose mutarotase (104 aa).

Position 18 (Y18) interacts with substrate. The active-site Proton donor is H22. Substrate is bound by residues Y41 and 76-77; that span reads WW.

It belongs to the rhamnose mutarotase family. As to quaternary structure, homodimer.

The protein resides in the cytoplasm. It catalyses the reaction alpha-L-rhamnose = beta-L-rhamnose. It functions in the pathway carbohydrate metabolism; L-rhamnose metabolism. Its function is as follows. Involved in the anomeric conversion of L-rhamnose. The chain is L-rhamnose mutarotase from Klebsiella pneumoniae subsp. pneumoniae (strain ATCC 700721 / MGH 78578).